The primary structure comprises 767 residues: Photosystem I P700 chlorophyll a apoprotein A1 (767 aa).

A run of 8 helical transmembrane segments spans residues 72 to 95, 158 to 181, 197 to 221, 305 to 323, 364 to 387, 403 to 429, 451 to 473, and 548 to 566; these read IFSA…FHGA, LMAL…FHYH, LNHH…HVSL, IAHH…GHMY, WHAQ…QHMY, IGLF…IAMV, AIIS…LYIH, and FMVH…LILL. Cysteine 590 and cysteine 599 together coordinate [4Fe-4S] cluster. 2 helical membrane-spanning segments follow: residues 606–627 and 681–703; these read HVFL…HFSW and TSAY…MFLF. Histidine 692 lines the chlorophyll a' pocket. The chlorophyll a site is built by methionine 700 and tyrosine 708. Tryptophan 709 serves as a coordination point for phylloquinone. A helical membrane pass occupies residues 741-761; the sequence is AVGVAHYLLGGIATTWAFFHA.

Belongs to the PsaA/PsaB family. The PsaA/B heterodimer binds the P700 chlorophyll special pair and subsequent electron acceptors. PSI consists of a core antenna complex that captures photons, and an electron transfer chain that converts photonic excitation into a charge separation. The cyanobacterial PSI reaction center is composed of one copy each of PsaA,B,C,D,E,F,I,J,K,L,M and X, and forms trimeric complexes. PSI electron transfer chain: 5 chlorophyll a, 1 chlorophyll a', 2 phylloquinones and 3 4Fe-4S clusters. PSI core antenna: 90 chlorophyll a, 22 carotenoids, 3 phospholipids and 1 galactolipid. P700 is a chlorophyll a/chlorophyll a' dimer, A0 is one or more chlorophyll a, A1 is one or both phylloquinones and FX is a shared 4Fe-4S iron-sulfur center. serves as cofactor.

It is found in the cellular thylakoid membrane. The enzyme catalyses reduced [plastocyanin] + hnu + oxidized [2Fe-2S]-[ferredoxin] = oxidized [plastocyanin] + reduced [2Fe-2S]-[ferredoxin]. PsaA and PsaB bind P700, the primary electron donor of photosystem I (PSI), as well as the electron acceptors A0, A1 and FX. PSI is a plastocyanin/cytochrome c6-ferredoxin oxidoreductase, converting photonic excitation into a charge separation, which transfers an electron from the donor P700 chlorophyll pair to the spectroscopically characterized acceptors A0, A1, FX, FA and FB in turn. Oxidized P700 is reduced on the lumenal side of the thylakoid membrane by plastocyanin or cytochrome c6. The sequence is that of Photosystem I P700 chlorophyll a apoprotein A1 from Synechococcus sp. (strain CC9902).